A 104-amino-acid polypeptide reads, in one-letter code: Small ribosomal subunit protein uS10 (104 aa).

Belongs to the universal ribosomal protein uS10 family. In terms of assembly, part of the 30S ribosomal subunit.

Its function is as follows. Involved in the binding of tRNA to the ribosomes. The protein is Small ribosomal subunit protein uS10 of Thermoplasma acidophilum (strain ATCC 25905 / DSM 1728 / JCM 9062 / NBRC 15155 / AMRC-C165).